Here is a 117-residue protein sequence, read N- to C-terminus: Large ribosomal subunit protein bL19 (117 aa).

The protein belongs to the bacterial ribosomal protein bL19 family.

In terms of biological role, this protein is located at the 30S-50S ribosomal subunit interface and may play a role in the structure and function of the aminoacyl-tRNA binding site. The chain is Large ribosomal subunit protein bL19 from Aliivibrio salmonicida (strain LFI1238) (Vibrio salmonicida (strain LFI1238)).